Reading from the N-terminus, the 680-residue chain is Tumor protein 63 (680 aa).

The segment at 1 to 107 (MNFETSRCAT…MQDSDLSDPM (107 aa)) is transcription activation. Residues 122 to 157 (QQIQNGSSSTSPYNTDHAQNSVTAPSPYAQPSSTFD) show a composition bias toward polar residues. The segment at 122–171 (QQIQNGSSSTSPYNTDHAQNSVTAPSPYAQPSSTFDALSPSPAIPSNTDY) is disordered. A DNA-binding region spans residues 170-362 (DYPGPHSFDV…KADEDSIRKQ (193 aa)). The Zn(2+) site is built by Cys-244, His-247, Cys-308, and Cys-312. Residues 351–360 (DRKADEDSIR) show a composition bias toward basic and acidic residues. Disordered stretches follow at residues 351 to 393 (DRKA…IKKR) and 436 to 472 (RQQQ…MNSM). Residues 352 to 388 (RKADEDSIRKQQVSDSAKNGDGTKRPFRQNTHGIQMT) are interaction with HIPK2. Residues 379 to 389 (RQNTHGIQMTS) are compositionally biased toward polar residues. Residues 394-443 (RSPDDELLYLPVRGRETYEMLLKIKESLELMQYLPQHTIETYRQQQQQQH) form an oligomerization region. Residues 437-463 (QQQQQQHQHLLQKQTSMQSQSSYGNSS) show a composition bias toward low complexity. The SAM domain maps to 541 to 607 (PPYPTDCSIV…WKGILDHRQL (67 aa)). The transactivation inhibition stretch occupies residues 610–680 (FSSPPHLLRT…KQQRIKEEGE (71 aa)). A Glycyl lysine isopeptide (Lys-Gly) (interchain with G-Cter in SUMO) cross-link involves residue Lys-676.

This sequence belongs to the p53 family. As to quaternary structure, binds DNA as a homotetramer. Isoform composition of the tetramer may determine transactivation activity. Interacts with HIPK2. Interacts with SSRP1, leading to stimulate coactivator activity. Interacts with WWP1. Interacts with PDS5A. Interacts (via activation domain) with NOC2L. Zn(2+) is required as a cofactor. Post-translationally, may be sumoylated. Ubiquitinated. Polyubiquitination involves WWP1 and leads to proteasomal degradation of this protein. Widely expressed, notably in thymus, prostate, placenta, and skeletal muscle, although the precise isoform varies according to tissue type. Progenitor cell layers of skin, breast and prostate express high levels of DeltaN-type isoforms.

It is found in the nucleus. Functionally, acts as a sequence specific DNA binding transcriptional activator or repressor. The isoforms contain a varying set of transactivation and auto-regulating transactivation inhibiting domains thus showing an isoform specific activity. May be required in conjunction with TP73/p73 for initiation of p53/TP53 dependent apoptosis in response to genotoxic insults and the presence of activated oncogenes. Involved in Notch signaling by probably inducing JAG1 and JAG2. Activates RIPK4 transcription. Plays a role in the regulation of epithelial morphogenesis. The ratio of DeltaN-type and TA*-type isoforms may govern the maintenance of epithelial stem cell compartments and regulate the initiation of epithelial stratification from the undifferentiated embryonal ectoderm. Required for limb formation from the apical ectodermal ridge. Activates transcription of the p21 promoter. The sequence is that of Tumor protein 63 (Tp63) from Rattus norvegicus (Rat).